Reading from the N-terminus, the 239-residue chain is Transcriptional regulatory protein BtsR (239 aa).

Residues 3–116 (KVLIVDDEPL…RLEKTLARLR (114 aa)) enclose the Response regulatory domain. D54 is modified (4-aspartylphosphate). The 103-residue stretch at 137 to 239 (IPCTGHSRIY…LKSLKEAIGL (103 aa)) folds into the HTH LytTR-type domain.

In terms of processing, phosphorylated by BtsS.

Its function is as follows. Member of the two-component regulatory system BtsS/BtsR. BtsR regulates expression of btsT by binding to its promoter region. The chain is Transcriptional regulatory protein BtsR from Shigella flexneri.